Reading from the N-terminus, the 85-residue chain is Large ribosomal subunit protein bL27 (85 aa).

Residues 1-21 (MAHKKAGGSTRNGRDSNAKRL) are disordered.

This sequence belongs to the bacterial ribosomal protein bL27 family.

This chain is Large ribosomal subunit protein bL27, found in Erwinia tasmaniensis (strain DSM 17950 / CFBP 7177 / CIP 109463 / NCPPB 4357 / Et1/99).